The following is a 454-amino-acid chain: Bifunctional protein GlmU (454 aa).

The tract at residues 1-226 (MSLEIVILAA…AMEVQGVNDR (226 aa)) is pyrophosphorylase. UDP-N-acetyl-alpha-D-glucosamine contacts are provided by residues 8–11 (LAAG), K22, Q73, 78–79 (GT), 99–101 (YGD), G136, E151, N166, and N224. A Mg(2+)-binding site is contributed by D101. N224 provides a ligand contact to Mg(2+). The linker stretch occupies residues 227-247 (MQQAQLERHYQRLRAEELMRQ). An N-acetyltransferase region spans residues 248 to 454 (GVTLLDPQRL…NWKRPEKIKK (207 aa)). 2 residues coordinate UDP-N-acetyl-alpha-D-glucosamine: R330 and K348. The active-site Proton acceptor is H360. The UDP-N-acetyl-alpha-D-glucosamine site is built by Y363 and N374. Acetyl-CoA is bound by residues A377, 383–384 (NY), S402, A420, and R437.

The protein in the N-terminal section; belongs to the N-acetylglucosamine-1-phosphate uridyltransferase family. In the C-terminal section; belongs to the transferase hexapeptide repeat family. Homotrimer. Mg(2+) serves as cofactor.

The protein localises to the cytoplasm. It carries out the reaction alpha-D-glucosamine 1-phosphate + acetyl-CoA = N-acetyl-alpha-D-glucosamine 1-phosphate + CoA + H(+). It catalyses the reaction N-acetyl-alpha-D-glucosamine 1-phosphate + UTP + H(+) = UDP-N-acetyl-alpha-D-glucosamine + diphosphate. It participates in nucleotide-sugar biosynthesis; UDP-N-acetyl-alpha-D-glucosamine biosynthesis; N-acetyl-alpha-D-glucosamine 1-phosphate from alpha-D-glucosamine 6-phosphate (route II): step 2/2. It functions in the pathway nucleotide-sugar biosynthesis; UDP-N-acetyl-alpha-D-glucosamine biosynthesis; UDP-N-acetyl-alpha-D-glucosamine from N-acetyl-alpha-D-glucosamine 1-phosphate: step 1/1. Its pathway is bacterial outer membrane biogenesis; LPS lipid A biosynthesis. Functionally, catalyzes the last two sequential reactions in the de novo biosynthetic pathway for UDP-N-acetylglucosamine (UDP-GlcNAc). The C-terminal domain catalyzes the transfer of acetyl group from acetyl coenzyme A to glucosamine-1-phosphate (GlcN-1-P) to produce N-acetylglucosamine-1-phosphate (GlcNAc-1-P), which is converted into UDP-GlcNAc by the transfer of uridine 5-monophosphate (from uridine 5-triphosphate), a reaction catalyzed by the N-terminal domain. The chain is Bifunctional protein GlmU from Pseudomonas aeruginosa (strain LESB58).